We begin with the raw amino-acid sequence, 260 residues long: Putative ABC transporter ATP-binding protein (260 aa).

One can recognise an ABC transporter domain in the interval 4 to 243 (ISMKNVTLKK…QVLENFYESP (240 aa)). 36-43 (GLNGSGKT) contacts ATP.

The protein belongs to the ABC transporter superfamily.

The protein is Putative ABC transporter ATP-binding protein (abcX) of Streptococcus mutans serotype c (strain ATCC 700610 / UA159).